The primary structure comprises 414 residues: Glutamyl-tRNA reductase (414 aa).

Residues 48–51 (TCNR), serine 104, 109–111 (EAQ), and glutamine 115 each bind substrate. The active-site Nucleophile is the cysteine 49. 184 to 189 (GAGEMI) lines the NADP(+) pocket.

It belongs to the glutamyl-tRNA reductase family. Homodimer.

It catalyses the reaction (S)-4-amino-5-oxopentanoate + tRNA(Glu) + NADP(+) = L-glutamyl-tRNA(Glu) + NADPH + H(+). It participates in porphyrin-containing compound metabolism; protoporphyrin-IX biosynthesis; 5-aminolevulinate from L-glutamyl-tRNA(Glu): step 1/2. Catalyzes the NADPH-dependent reduction of glutamyl-tRNA(Glu) to glutamate 1-semialdehyde (GSA). This is Glutamyl-tRNA reductase from Methylobacillus flagellatus (strain ATCC 51484 / DSM 6875 / VKM B-1610 / KT).